The primary structure comprises 448 residues: Phosphoglucosamine mutase (448 aa).

The active-site Phosphoserine intermediate is the serine 100. Mg(2+)-binding residues include serine 100, aspartate 240, aspartate 242, and aspartate 244. At serine 100 the chain carries Phosphoserine.

Belongs to the phosphohexose mutase family. Mg(2+) serves as cofactor. In terms of processing, activated by phosphorylation.

It carries out the reaction alpha-D-glucosamine 1-phosphate = D-glucosamine 6-phosphate. Catalyzes the conversion of glucosamine-6-phosphate to glucosamine-1-phosphate. This is Phosphoglucosamine mutase from Clostridium acetobutylicum (strain ATCC 824 / DSM 792 / JCM 1419 / IAM 19013 / LMG 5710 / NBRC 13948 / NRRL B-527 / VKM B-1787 / 2291 / W).